Here is a 298-residue protein sequence, read N- to C-terminus: uncharacterized protein (298 aa).

The next 9 membrane-spanning stretches (helical) occupy residues 10–30 (VIYT…WKLL), 36–56 (LDIL…VLFF), 76–96 (ILSL…YIWA), 101–121 (FLLE…LLGI), 142–162 (GVII…LLAF), 179–199 (AIGL…YLLF), 212–232 (GTWL…LLFA), 243–263 (VGIL…FVYH), and 271–291 (AFTF…QVKW). 2 consecutive EamA domains span residues 17 to 148 (FIMW…ISAF) and 162 to 286 (FSFG…LFTF).

This sequence belongs to the EamA transporter family.

The protein localises to the cell membrane. This is an uncharacterized protein from Bacillus subtilis (strain 168).